The sequence spans 237 residues: Carboxy-S-adenosyl-L-methionine synthase (237 aa).

S-adenosyl-L-methionine-binding positions include Tyr40, 65 to 67 (GCS), 116 to 117 (DI), Asn131, and Arg194.

This sequence belongs to the class I-like SAM-binding methyltransferase superfamily. Cx-SAM synthase family. In terms of assembly, homodimer.

It catalyses the reaction prephenate + S-adenosyl-L-methionine = carboxy-S-adenosyl-L-methionine + 3-phenylpyruvate + H2O. Functionally, catalyzes the conversion of S-adenosyl-L-methionine (SAM) to carboxy-S-adenosyl-L-methionine (Cx-SAM). The polypeptide is Carboxy-S-adenosyl-L-methionine synthase (Dichelobacter nodosus (strain VCS1703A)).